Reading from the N-terminus, the 496-residue chain is Guanosine-5'-triphosphate,3'-diphosphate pyrophosphatase (496 aa).

This sequence belongs to the GppA/Ppx family. GppA subfamily.

The catalysed reaction is guanosine 3'-diphosphate 5'-triphosphate + H2O = guanosine 3',5'-bis(diphosphate) + phosphate + H(+). The protein operates within purine metabolism; ppGpp biosynthesis; ppGpp from GTP: step 2/2. Catalyzes the conversion of pppGpp to ppGpp. Guanosine pentaphosphate (pppGpp) is a cytoplasmic signaling molecule which together with ppGpp controls the 'stringent response', an adaptive process that allows bacteria to respond to amino acid starvation, resulting in the coordinated regulation of numerous cellular activities. This chain is Guanosine-5'-triphosphate,3'-diphosphate pyrophosphatase, found in Aeromonas hydrophila subsp. hydrophila (strain ATCC 7966 / DSM 30187 / BCRC 13018 / CCUG 14551 / JCM 1027 / KCTC 2358 / NCIMB 9240 / NCTC 8049).